The chain runs to 379 residues: MKLKFELKKKNGNARRGQLIFERGTVQTPAFMPVGTYGTVKGMTPEEVKETGAQILLGNTFHLWLRPGQEVMKMHGDLHDFMNWQGPILTDSGGFQVFSLGDIRKITEEGVHFRNPVNGDKIFMDAEKSMEIQKDLGSDIVMIFDECTPYPATHDEAKKSMEMSLRWAKRSRDHFDKLENPNNLFGIVQGGVYEDLRDVSVKGLTEIGFDGYAVGGLAVGEPKEDMHRVLEHTCPQLPEDKPRYLMGVGKPEDLVEGVRRGIDMFDCVMPTRNARNGHLFVTGGVIKIRNAAHKTDTTPLDLHCDCYTCKNYSKSYLHHLDRCNEILGARLNTIHNLRYYQRLMESIRKAIDEDRFDQFVAEFYARRNREVPPLQKDKA.

Aspartate 91 acts as the Proton acceptor in catalysis. Residues 91 to 95, aspartate 145, glutamine 189, and glycine 216 contribute to the substrate site; that span reads DSGGF. Residues 247–253 form an RNA binding region; sequence GVGKPED. Aspartate 266 serves as the catalytic Nucleophile. Residues 271 to 275 are RNA binding; important for wobble base 34 recognition; it reads TRNAR. 4 residues coordinate Zn(2+): cysteine 304, cysteine 306, cysteine 309, and histidine 335.

This sequence belongs to the queuine tRNA-ribosyltransferase family. Homodimer. Within each dimer, one monomer is responsible for RNA recognition and catalysis, while the other monomer binds to the replacement base PreQ1. It depends on Zn(2+) as a cofactor.

It catalyses the reaction 7-aminomethyl-7-carbaguanine + guanosine(34) in tRNA = 7-aminomethyl-7-carbaguanosine(34) in tRNA + guanine. It participates in tRNA modification; tRNA-queuosine biosynthesis. Its function is as follows. Catalyzes the base-exchange of a guanine (G) residue with the queuine precursor 7-aminomethyl-7-deazaguanine (PreQ1) at position 34 (anticodon wobble position) in tRNAs with GU(N) anticodons (tRNA-Asp, -Asn, -His and -Tyr). Catalysis occurs through a double-displacement mechanism. The nucleophile active site attacks the C1' of nucleotide 34 to detach the guanine base from the RNA, forming a covalent enzyme-RNA intermediate. The proton acceptor active site deprotonates the incoming PreQ1, allowing a nucleophilic attack on the C1' of the ribose to form the product. After dissociation, two additional enzymatic reactions on the tRNA convert PreQ1 to queuine (Q), resulting in the hypermodified nucleoside queuosine (7-(((4,5-cis-dihydroxy-2-cyclopenten-1-yl)amino)methyl)-7-deazaguanosine). The polypeptide is Queuine tRNA-ribosyltransferase (Vibrio cholerae serotype O1 (strain ATCC 39541 / Classical Ogawa 395 / O395)).